Consider the following 464-residue polypeptide: UDP-N-acetylmuramate--L-alanine ligase (464 aa).

118–124 provides a ligand contact to ATP; it reads GTHGKTT.

The protein belongs to the MurCDEF family.

It is found in the cytoplasm. It catalyses the reaction UDP-N-acetyl-alpha-D-muramate + L-alanine + ATP = UDP-N-acetyl-alpha-D-muramoyl-L-alanine + ADP + phosphate + H(+). The protein operates within cell wall biogenesis; peptidoglycan biosynthesis. Functionally, cell wall formation. In Dinoroseobacter shibae (strain DSM 16493 / NCIMB 14021 / DFL 12), this protein is UDP-N-acetylmuramate--L-alanine ligase.